Here is a 224-residue protein sequence, read N- to C-terminus: UPF0111 protein CPn_0681/CP_0066/CPj0681/CpB0708 (224 aa).

The protein belongs to the UPF0111 family.

In Chlamydia pneumoniae (Chlamydophila pneumoniae), this protein is UPF0111 protein CPn_0681/CP_0066/CPj0681/CpB0708.